A 307-amino-acid chain; its full sequence is 2-phospho-L-lactate transferase (307 aa).

7,8-didemethyl-8-hydroxy-5-deazariboflavin-binding residues include D48 and K87.

The protein belongs to the CofD family. In terms of assembly, homodimer. Mg(2+) is required as a cofactor.

It catalyses the reaction (2S)-lactyl-2-diphospho-5'-guanosine + 7,8-didemethyl-8-hydroxy-5-deazariboflavin = oxidized coenzyme F420-0 + GMP + H(+). It participates in cofactor biosynthesis; coenzyme F420 biosynthesis. Its function is as follows. Catalyzes the transfer of the 2-phospholactate moiety from (2S)-lactyl-2-diphospho-5'-guanosine to 7,8-didemethyl-8-hydroxy-5-deazariboflavin (FO) with the formation of oxidized coenzyme F420-0 and GMP. This is 2-phospho-L-lactate transferase from Methanosarcina acetivorans (strain ATCC 35395 / DSM 2834 / JCM 12185 / C2A).